A 379-amino-acid polypeptide reads, in one-letter code: MRVLGLMSGTSADGVDAVLAEFSGSPSEPKWSLLNLVCTPYPEDLRQTVINAGQGITLNSREWLELSESITEVHAQAALACDPSAQAELVGSHGQTVWHRPPQKNHRGASWQILQAPLLAELLKRPVVHDFRAADLALGGQGAPLVPMADAALLGRVGGWRGVLNLGGIANLTLIPPRSGPDRRASVMGWDCGPANSLIDLAVEQISKGKLAFDHDGSIAASGHPHTTTIERWLKEAFFQLPPPKSTGREQFGLADLEQRLKELPKLSTANRVATLTAFSAAVVAQDLNNLRIRNLVRPLELIVAGGGSRNPVLMNELRQRCRGMRVLNSDELGLSAEAREGLAFALLAWWHCLQHPGNAPAITGAKRAAVLGVRADPA.

ATP is bound at residue 9–16 (GTSADGVD).

This sequence belongs to the anhydro-N-acetylmuramic acid kinase family.

The enzyme catalyses 1,6-anhydro-N-acetyl-beta-muramate + ATP + H2O = N-acetyl-D-muramate 6-phosphate + ADP + H(+). The protein operates within amino-sugar metabolism; 1,6-anhydro-N-acetylmuramate degradation. It functions in the pathway cell wall biogenesis; peptidoglycan recycling. Functionally, catalyzes the specific phosphorylation of 1,6-anhydro-N-acetylmuramic acid (anhMurNAc) with the simultaneous cleavage of the 1,6-anhydro ring, generating MurNAc-6-P. Is required for the utilization of anhMurNAc either imported from the medium or derived from its own cell wall murein, and thus plays a role in cell wall recycling. The polypeptide is Anhydro-N-acetylmuramic acid kinase (Prochlorococcus marinus (strain MIT 9303)).